The primary structure comprises 322 residues: tRNA uridine(34) hydroxylase (322 aa).

Positions 126–220 (LAEDTVVIDA…YGKDPEVKGE (95 aa)) constitute a Rhodanese domain. Cys180 serves as the catalytic Cysteine persulfide intermediate.

Belongs to the TrhO family.

It carries out the reaction uridine(34) in tRNA + AH2 + O2 = 5-hydroxyuridine(34) in tRNA + A + H2O. Functionally, catalyzes oxygen-dependent 5-hydroxyuridine (ho5U) modification at position 34 in tRNAs. This Shouchella clausii (strain KSM-K16) (Alkalihalobacillus clausii) protein is tRNA uridine(34) hydroxylase.